The primary structure comprises 289 residues: Acetyl-coenzyme A carboxylase carboxyl transferase subunit beta (289 aa).

The 262-residue stretch at 28–289 (VMTKCPKCKK…QGEGMAVWQN (262 aa)) folds into the CoA carboxyltransferase N-terminal domain. 4 residues coordinate Zn(2+): Cys32, Cys35, Cys51, and Cys54. The C4-type zinc-finger motif lies at 32–54 (CPKCKKIMYTKELLKNLKVCVNC).

This sequence belongs to the AccD/PCCB family. Acetyl-CoA carboxylase is a heterohexamer composed of biotin carboxyl carrier protein (AccB), biotin carboxylase (AccC) and two subunits each of ACCase subunit alpha (AccA) and ACCase subunit beta (AccD). Zn(2+) serves as cofactor.

It localises to the cytoplasm. The catalysed reaction is N(6)-carboxybiotinyl-L-lysyl-[protein] + acetyl-CoA = N(6)-biotinyl-L-lysyl-[protein] + malonyl-CoA. Its pathway is lipid metabolism; malonyl-CoA biosynthesis; malonyl-CoA from acetyl-CoA: step 1/1. In terms of biological role, component of the acetyl coenzyme A carboxylase (ACC) complex. Biotin carboxylase (BC) catalyzes the carboxylation of biotin on its carrier protein (BCCP) and then the CO(2) group is transferred by the transcarboxylase to acetyl-CoA to form malonyl-CoA. The sequence is that of Acetyl-coenzyme A carboxylase carboxyl transferase subunit beta from Bacillus cytotoxicus (strain DSM 22905 / CIP 110041 / 391-98 / NVH 391-98).